The sequence spans 465 residues: Mothers against decapentaplegic homolog 5 (465 aa).

Position 2 is an N-acetylthreonine (Thr2). Residues 13 to 137 enclose the MH1 domain; it reads PAVKRLLGWK…YKRVESPVLP (125 aa). The Zn(2+) site is built by Cys65, Cys110, Cys122, and His127. A disordered region spans residues 163–249; it reads NEPHMPQNAT…PMDTSNNMIP (87 aa). A compositionally biased stretch (polar residues) spans 169–182; that stretch reads QNATFPDSFHQPNN. A compositionally biased stretch (pro residues) spans 186 to 197; that stretch reads PLSPNSPYPPSP. A compositionally biased stretch (low complexity) spans 198–214; the sequence is ASSTYPNSPASSGPGSP. The span at 234–249 shows a compositional bias: polar residues; it reads GQDNSQPMDTSNNMIP. The 195-residue stretch at 271–465 folds into the MH2 domain; the sequence is WCSIVYYELN…SPLNPISSVS (195 aa). 2 positions are modified to phosphoserine: Ser463 and Ser465.

The protein belongs to the dwarfin/SMAD family. As to quaternary structure, homodimer. Forms trimers with the co-SMAD SMAD4. Interacts with PEBP2-alpha subunit and SMURF1. Interacts with SUV39H1 and SUV39H2. Interacts (via MH2 domain) with LEMD3. Interacts with WWP1. Interacts with TMEM119. Interacts with ZNF8. Interacts with RANBP3L. Interacts with HK1. Interacts with HGS; this interaction attenuates BMP signaling. In terms of processing, phosphorylated on serine by BMP (bone morphogenetic proteins) type 1 receptor kinase. Ubiquitin-mediated proteolysis by SMAD-specific E3 ubiquitin ligase SMURF1. As to expression, ubiquitous.

It localises to the cytoplasm. The protein localises to the nucleus. It is found in the mitochondrion. In terms of biological role, transcriptional regulator that plays a role in various cellular processes including embryonic development, cell differentiation, angiogenesis and tissue homeostasis. Upon BMP ligand binding to their receptors at the cell surface, is phosphorylated by activated type I BMP receptors (BMPRIs) and associates with SMAD4 to form a heteromeric complex which translocates into the nucleus acting as transcription factor. In turn, the hetero-trimeric complex recognizes cis-regulatory elements containing Smad Binding Elements (SBEs) to modulate the outcome of the signaling network. Non-phosphorylated SMAD5 has a cytoplasmic role in energy metabolism regulation by promoting mitochondrial respiration and glycolysis in response to cytoplasmic pH changes. Mechanistically, interacts with hexokinase 1/HK1 and thereby accelerates glycolysis. The chain is Mothers against decapentaplegic homolog 5 (SMAD5) from Homo sapiens (Human).